The chain runs to 260 residues: Adenosylcobinamide-GDP ribazoletransferase (260 aa).

The next 7 membrane-spanning stretches (helical) occupy residues 42 to 62 (PLAGGILGLLAGVALLIANAI), 64 to 84 (LPPLAAALIAIGALAAMTGAL), 117 to 137 (FAALTLVIWTGVKASLLMAII), 144 to 164 (YALLALIGTEAASRAGMLAFW), 192 to 212 (GLGLALLAIGFLPSGGMVALI), 214 to 234 (ALVLMTVVLFGFARLCMAKIG), and 240 to 260 (TLGAAQQIGSLAALIGLVMAL).

This sequence belongs to the CobS family. Mg(2+) is required as a cofactor.

The protein resides in the cell inner membrane. The enzyme catalyses alpha-ribazole + adenosylcob(III)inamide-GDP = adenosylcob(III)alamin + GMP + H(+). The catalysed reaction is alpha-ribazole 5'-phosphate + adenosylcob(III)inamide-GDP = adenosylcob(III)alamin 5'-phosphate + GMP + H(+). Its pathway is cofactor biosynthesis; adenosylcobalamin biosynthesis; adenosylcobalamin from cob(II)yrinate a,c-diamide: step 7/7. Functionally, joins adenosylcobinamide-GDP and alpha-ribazole to generate adenosylcobalamin (Ado-cobalamin). Also synthesizes adenosylcobalamin 5'-phosphate from adenosylcobinamide-GDP and alpha-ribazole 5'-phosphate. In Brucella abortus (strain S19), this protein is Adenosylcobinamide-GDP ribazoletransferase.